A 466-amino-acid chain; its full sequence is Communesin N16 acyltransferase cnsK (466 aa).

It belongs to the fumigaclavine B O-acetyltransferase family.

Its pathway is alkaloid biosynthesis. In terms of biological role, communesin N16 acyltransferase; part of the gene cluster that mediates the biosynthesis of communesins, a prominent class of indole alkaloids with great potential as pharmaceuticals. Communesins are biosynthesized by the coupling of tryptamine and aurantioclavine, two building blocks derived from L-tryptophan. The L-tryptophan decarboxylase cnsB converts L-tryptophan to tryptamine, whereas the tryptophan dimethylallyltransferase cnsF converts L-tryptophan to 4-dimethylallyl tryptophan which is further transformed to aurantioclavine by the aurantioclavine synthase cnsA, probably aided by the catalase cnsD. The cytochrome P450 monooxygenase cnsC catalyzes the heterodimeric coupling between the two different indole moieties, tryptamine and aurantioclavine, to construct vicinal quaternary stereocenters and yield the heptacyclic communesin scaffold. The O-methyltransferase cnsE then methylates the communesin scaffold to produce communesin K, the simplest characterized communesin that contains the heptacyclic core. The dioxygenase cnsJ converts communesin K into communesin I. Acylation to introduce the hexadienyl group at position N16 of communesin I by the acyltransferase cnsK leads to the production of communesin B. The hexadienyl group is produced by the highly reducing polyketide synthase cnsI, before being hydrolytically removed from cnsI by the serine hydrolase cnsH, converted into hexadienyl-CoA by the CoA ligase cnsG, and then transferred to communesin I by cnsK. Surprisingly, cnsK may also be a promiscuous acyltransferase that can tolerate a range of acyl groups, including acetyl-, propionyl-, and butyryl-CoA, which lead to communesins A, G and H respectively. The roles of the alpha-ketoglutarate-dependent dioxygenases cnsM and cnsP have still to be determined. In Penicillium expansum (Blue mold rot fungus), this protein is Communesin N16 acyltransferase cnsK.